The following is a 515-amino-acid chain: 4-hydroxybenzoate brominase (decarboxylating) (515 aa).

Residues Ser-13, Glu-32, Val-40, Phe-41, His-51, Val-102, and Gln-364 each coordinate FAD.

It belongs to the FMO family. FAD is required as a cofactor.

It carries out the reaction 2 bromide + 4-hydroxybenzoate + 2 NADPH + 2 O2 + 5 H(+) = 2,4-dibromophenol + CO2 + 2 NADP(+) + 4 H2O. The catalysed reaction is bromide + 4-hydroxybenzoate + NADPH + O2 + 2 H(+) = 3-bromo-4-hydroxybenzoate + NADP(+) + 2 H2O. The enzyme catalyses 3-bromo-4-hydroxybenzoate + bromide + NADPH + O2 + 3 H(+) = 2,4-dibromophenol + CO2 + NADP(+) + 2 H2O. It catalyses the reaction 3,4-dihydroxybenzoate + 2 bromide + 2 NADPH + 2 O2 + 5 H(+) = 3,5-dibromobenzene-1,2-diol + CO2 + 2 NADP(+) + 4 H2O. It carries out the reaction 3,4-dihydroxybenzoate + bromide + NADPH + O2 + 2 H(+) = 3-bromo-4,5-dihydroxybenzoate + NADP(+) + 2 H2O. The catalysed reaction is 3-bromo-4,5-dihydroxybenzoate + bromide + NADPH + O2 + 3 H(+) = 3,5-dibromobenzene-1,2-diol + CO2 + NADP(+) + 2 H2O. Its activity is regulated as follows. Activity is abolished in the absence of either bromide or NADPH, while a partial reduction in activity is observed upon omission of FAD. Activity does not require the addition of a flavin reductase to regenerate FADH(2) in situ. Functionally, brominase involved in the biosynthesis of polybrominated aromatic organic compounds. Catalyzes the bromination of 4-hydroxybenzoate (4-HBA) to 3-bromo-4-hydroxybenzoate, followed by bromination and decarboxylation of 3-bromo-4-hydroxybenzoate to 2,4-dibromophenol. Can also use 3,4-dihydroxybenzoate, with lower efficiency, forming 3-bromo-4,5-dihydroxybenzoate and 3,5-dibromobenzene-1,2-diol. Can utilize iodide in vivo leading to the formation of iodophenols, but cannot use chloride. This chain is 4-hydroxybenzoate brominase (decarboxylating), found in Pseudoalteromonas luteoviolacea (strain 2ta16).